Consider the following 218-residue polypeptide: Ribonuclease HII (218 aa).

Residues 13–202 (DLVAGVDEVG…VRAAHEARAT (190 aa)) form the RNase H type-2 domain. Residues aspartate 19, glutamate 20, and aspartate 111 each coordinate a divalent metal cation.

This sequence belongs to the RNase HII family. Mn(2+) is required as a cofactor. Requires Mg(2+) as cofactor.

It is found in the cytoplasm. It carries out the reaction Endonucleolytic cleavage to 5'-phosphomonoester.. Functionally, endonuclease that specifically degrades the RNA of RNA-DNA hybrids. The chain is Ribonuclease HII from Pseudomonas syringae pv. syringae (strain B728a).